We begin with the raw amino-acid sequence, 117 residues long: Peptidyl-tRNA hydrolase (117 aa).

The protein belongs to the PTH2 family.

Its subcellular location is the cytoplasm. It carries out the reaction an N-acyl-L-alpha-aminoacyl-tRNA + H2O = an N-acyl-L-amino acid + a tRNA + H(+). In terms of biological role, the natural substrate for this enzyme may be peptidyl-tRNAs which drop off the ribosome during protein synthesis. This is Peptidyl-tRNA hydrolase from Metallosphaera sedula (strain ATCC 51363 / DSM 5348 / JCM 9185 / NBRC 15509 / TH2).